A 310-amino-acid chain; its full sequence is Beta-lactamase AST-1 (310 aa).

The first 31 residues, 1–31 (MTFSALPFRRADRRRLLAAALAACALTLTAA), serve as a signal peptide directing secretion. A lipid anchor (N-palmitoyl cysteine) is attached at Cys32. Residue Cys32 is the site of S-diacylglycerol cysteine attachment. Residue Ser91 is the Acyl-ester intermediate of the active site. Ser151 is a binding site for substrate. The active-site Proton acceptor is Glu187. Residue 255-257 (KTG) coordinates substrate.

It belongs to the class-A beta-lactamase family.

Its subcellular location is the cell membrane. It carries out the reaction a beta-lactam + H2O = a substituted beta-amino acid. Its activity is regulated as follows. Inhibited by clavulanic acid. In terms of biological role, confers high levels of resistance to amoxicillin, benzylpenicillin, piperacillin, ticarcillin and cephalothin. Not active against ceftazidime, cefotaxime and aztreonam. This is Beta-lactamase AST-1 (bla) from Nocardia asteroides.